Consider the following 172-residue polypeptide: MIDSDGFRANVGIIICNQYGQVMWARRFGQHSWQFPQGGLDDGESAEEAMYRELYEEVGLRPEQVKILTSTRSWLRYRLPKRLVRQDSKPVCIGQKQKWFLLQLNGNDNNINLNSSGHPEFDDWRWVNYWYPVRQVVSFKRDVYRKVMKEFAPTTLAFQVNDTGRKRNRPRN.

The region spanning 6-149 (GFRANVGIII…KRDVYRKVMK (144 aa)) is the Nudix hydrolase domain. A Nudix box motif is present at residues 38 to 59 (GGLDDGESAEEAMYRELYEEVG).

This sequence belongs to the Nudix hydrolase family. RppH subfamily. A divalent metal cation is required as a cofactor.

Functionally, accelerates the degradation of transcripts by removing pyrophosphate from the 5'-end of triphosphorylated RNA, leading to a more labile monophosphorylated state that can stimulate subsequent ribonuclease cleavage. In Shewanella denitrificans (strain OS217 / ATCC BAA-1090 / DSM 15013), this protein is RNA pyrophosphohydrolase.